Here is a 413-residue protein sequence, read N- to C-terminus: NAD-dependent dihydropyrimidine dehydrogenase subunit PreT homolog (413 aa).

E287 provides a ligand contact to NAD(+).

The protein belongs to the NADH dehydrogenase family. Heterotetramer of 2 PreA and 2 PreT subunits.

The catalysed reaction is 5,6-dihydrouracil + NAD(+) = uracil + NADH + H(+). It carries out the reaction 5,6-dihydrothymine + NAD(+) = thymine + NADH + H(+). Involved in pyrimidine base degradation. Catalyzes physiologically the reduction of uracil to 5,6-dihydrouracil (DHU) by using NADH as a specific cosubstrate. It also catalyzes the reverse reaction and the reduction of thymine to 5,6-dihydrothymine (DHT). The chain is NAD-dependent dihydropyrimidine dehydrogenase subunit PreT homolog (preT) from Salmonella typhi.